We begin with the raw amino-acid sequence, 630 residues long: Golgin subfamily A member 8K (630 aa).

The tract at residues 1–76 is disordered; it reads MAEETQHNKL…TSSATLKDLE (76 aa). Coiled-coil stretches lie at residues 86–148 and 224–411; these read LDSR…LNTD and LTQL…QQNQ. Over residues 352-362 the composition is skewed to basic and acidic residues; that stretch reads KQEERIQEQHK. 2 disordered regions span residues 352-379 and 424-444; these read KQEE…EPNN and GEGH…PMPS.

It belongs to the GOLGA8 family.

The sequence is that of Golgin subfamily A member 8K from Homo sapiens (Human).